Reading from the N-terminus, the 302-residue chain is MDNRTLTHLRQLEAESIHIIREVVAEFENPVMLYSIGKDSSVMLHLARKAFYPGTPPFPLMHVDTTWKFREMIEFRDRMAKEAGMELIVHINQEGVAQGIGPFSHGSRVHTDVMKTQSLKQALDKYRFDAAFGGARRDEERSRAKERVYSFRDRNHAWDPKNQRPELWRLYNGQVHKGESIRVFPLSNWTELDIWQYIYLEEIPIVPLYYAARRPVVERDGTLIMVDDDRMPLEPGEEPEMAMVRFRTLGCYPLTGAIRSEAATLPEIIQEMLLTKSSERQGRVIDHDAAGSMEEKKRQGYF.

It belongs to the PAPS reductase family. CysD subfamily. Heterodimer composed of CysD, the smaller subunit, and CysN.

The enzyme catalyses sulfate + ATP + H(+) = adenosine 5'-phosphosulfate + diphosphate. The protein operates within sulfur metabolism; hydrogen sulfide biosynthesis; sulfite from sulfate: step 1/3. In terms of biological role, with CysN forms the ATP sulfurylase (ATPS) that catalyzes the adenylation of sulfate producing adenosine 5'-phosphosulfate (APS) and diphosphate, the first enzymatic step in sulfur assimilation pathway. APS synthesis involves the formation of a high-energy phosphoric-sulfuric acid anhydride bond driven by GTP hydrolysis by CysN coupled to ATP hydrolysis by CysD. This is Sulfate adenylyltransferase subunit 2 2 from Alkalilimnicola ehrlichii (strain ATCC BAA-1101 / DSM 17681 / MLHE-1).